The sequence spans 378 residues: Ribosomal RNA large subunit methyltransferase G (378 aa).

The protein belongs to the methyltransferase superfamily. RlmG family.

It localises to the cytoplasm. The catalysed reaction is guanosine(1835) in 23S rRNA + S-adenosyl-L-methionine = N(2)-methylguanosine(1835) in 23S rRNA + S-adenosyl-L-homocysteine + H(+). Specifically methylates the guanine in position 1835 (m2G1835) of 23S rRNA. This chain is Ribosomal RNA large subunit methyltransferase G, found in Escherichia coli O139:H28 (strain E24377A / ETEC).